We begin with the raw amino-acid sequence, 1306 residues long: DNA-directed RNA polymerase subunit beta' (1306 aa).

The Zn(2+) site is built by Cys-214, Cys-285, Cys-292, and Cys-295. Disordered regions lie at residues 1234–1263 (LDNG…PNRL) and 1281–1306 (IARA…DDDK). The span at 1247–1259 (QGERDNNNSDKKP) shows a compositional bias: basic and acidic residues.

Belongs to the RNA polymerase beta' chain family. RpoC2 subfamily. As to quaternary structure, in cyanobacteria the RNAP catalytic core is composed of 2 alpha, 1 beta, 1 beta', 1 gamma and 1 omega subunit. When a sigma factor is associated with the core the holoenzyme is formed, which can initiate transcription. Zn(2+) is required as a cofactor.

It carries out the reaction RNA(n) + a ribonucleoside 5'-triphosphate = RNA(n+1) + diphosphate. Its function is as follows. DNA-dependent RNA polymerase catalyzes the transcription of DNA into RNA using the four ribonucleoside triphosphates as substrates. This chain is DNA-directed RNA polymerase subunit beta', found in Crocosphaera subtropica (strain ATCC 51142 / BH68) (Cyanothece sp. (strain ATCC 51142)).